The primary structure comprises 573 residues: Putative 15-O-acetyltransferase SAT12 (573 aa).

The segment at 1 to 40 (MLDDDCSPTSSSEMSNASSREASITSRSSSTSGNNSLPED) is disordered. Over residues 7–36 (SPTSSSEMSNASSREASITSRSSSTSGNNS) the composition is skewed to low complexity.

The protein belongs to the trichothecene O-acetyltransferase family.

The protein operates within mycotoxin biosynthesis. In terms of biological role, putative 15-O-acetyltransferase; part of the satratoxin SC2 cluster involved in the biosynthesis of satratoxins, trichothecene mycotoxins that are associated with human food poisonings. Satratoxins are suggested to be made by products of multiple gene clusters (SC1, SC2 and SC3) that encode 21 proteins in all, including polyketide synthases, acetyltransferases, and other enzymes expected to modify the trichothecene skeleton. SC1 encodes 10 proteins, SAT1 to SAT10. The largest are SAT8, which encodes a putative polyketide synthase (PKS) with a conventional non-reducing architecture, and SAT10, a putative protein containing four ankyrin repeats and thus may be involved in protein scaffolding. The putative short-chain reductase SAT3 may assist the PKS in some capacity. SAT6 contains a secretory lipase domain and acts probably as a trichothecene esterase. SAT5 encodes a putative acetyltransferase, and so, with SAT6, may affect endogenous protection from toxicity. The probable transcription factor SAT9 may regulate the expression of the SC1 cluster. SC2 encodes proteins SAT11 to SAT16, the largest of which encodes the putative reducing PKS SAT13. SAT11 is a cytochrome P450 monooxygenase, while SAT14 and SAT16 are probable acetyltransferases. The SC2 cluster may be regulated by the transcription factor SAT15. SC3 is a small cluster that encodes 5 proteins, SAT17 to SAT21. SAT21 is a putative MFS-type transporter which may have a role in exporting secondary metabolites. The four other proteins putatively encoded in SC3 include the taurine hydroxylase-like protein SAT17, the O-methyltransferase SAT18, the acetyltransferase SAT19, and the Cys6-type zinc finger SAT20, the latter being probably involved in regulation of SC3 expression. This chain is Putative 15-O-acetyltransferase SAT12, found in Stachybotrys chartarum (strain CBS 109288 / IBT 7711) (Toxic black mold).